Here is a 98-residue protein sequence, read N- to C-terminus: Defensin (98 aa).

The first 19 residues, 1–19 (MRTFLVTFVLVVVVGVISA), serve as a signal peptide directing secretion. A propeptide spanning residues 20–58 (YPSNPVEVEAEDFDAQDPDLQTFQDTFYEVPQVHSRQKR) is cleaved from the precursor. Cystine bridges form between C61–C88, C74–C94, and C78–C96.

As to expression, is synthesized by the fat body and eventually secreted into the hemolymph.

It localises to the secreted. Has antiparasitic activity against promastigote forms of L.major, and antibacterial activity against Gram-positive bacterium S.aureus. Has antifungal activity against the yeasts C.albicans and S.cerevisiae, but not C.glabrata. Has antifungal activity against filamentous fungi A.fumigatus, F.culmorum, F.oxysporum, N.crassa, T.viride and T.mentagrophytes, but not B.bassiana. The protein is Defensin of Phlebotomus duboscqi (Sandfly).